A 617-amino-acid polypeptide reads, in one-letter code: Sphingosine kinase 2 (617 aa).

Residues 1–140 (MAPPPLLPVA…LSGDQEITPE (140 aa)) are required for binding to sulfatide and phosphoinositides and for membrane localization. The Nuclear localization signal motif lies at 87–95 (RGRRGGRRR). One can recognise a DAGKc domain in the interval 143-290 (PRKPRLLILV…LDLLSVTLAS (148 aa)). ATP-binding positions include 153–155 (NPF) and 185–189 (TERQN). 210 to 213 (SGDG) serves as a coordination point for substrate. Aspartate 212 serves as the catalytic Proton donor/acceptor. Residues glutamate 217 and 242-244 (GSG) contribute to the ATP site. Aspartate 309 provides a ligand contact to substrate. Residues arginine 316 and arginine 322 each coordinate ATP. Phosphoserine is present on residues serine 358 and serine 364. Residues 371 to 472 (APAPAATHSP…GFLPPTHSAP (102 aa)) are disordered. A Phosphothreonine modification is found at threonine 377. The Nuclear export signal signature appears at 381–390 (LHRSVSDLPL). Residues serine 384 and serine 386 each carry the phosphoserine modification. Gly residues predominate over residues 412–426 (NGGGPELTGDWGGAG). Phosphothreonine is present on threonine 578. 586–588 (DGE) serves as a coordination point for ATP.

Interacts with histone H3. Interacts with HDAC1, HDAC2, MBD2 and SIN3A. Interacts with EEF1A1; the interaction enhances SPHK2 kinase activity. Interacts with PHB2. The cofactor is Mg(2+). Phosphorylated by PKD on Ser-384 and Ser-386 upon PMA treatment. Phosphorylation induces export from the nucleus to the cytoplasm. Phosphorylated by MAPK1 and MAPK2 at Thr-578, phosphorylation is induced by agonists such as EGF and PMA and increases kinase activity. Post-translationally, cleaved by CASP1 in apoptotic cells. The truncated form is released from cells. As to expression, expressed in heart, brain, liver, kidney and testis. Expressed by mast cells (at protein level). In the substantia nigra, expressed by dopaminergic neurons (at protein level).

The protein localises to the lysosome membrane. It is found in the cytoplasm. It localises to the cell membrane. The protein resides in the endoplasmic reticulum. Its subcellular location is the nucleus. The protein localises to the mitochondrion inner membrane. The catalysed reaction is a sphingoid base + ATP = a sphingoid 1-phosphate + ADP + H(+). It carries out the reaction sphing-4-enine + ATP = sphing-4-enine 1-phosphate + ADP + H(+). The enzyme catalyses sphinganine + ATP = sphinganine 1-phosphate + ADP + H(+). It catalyses the reaction (4R)-hydroxysphinganine + ATP = (4R)-hydroxysphinganine 1-phosphate + ADP + H(+). Functionally, catalyzes the phosphorylation of sphingosine to form sphingosine-1-phosphate (SPP), a lipid mediator with both intra- and extracellular functions. Also acts on D-erythro-dihydrosphingosine, D-erythro-sphingosine and L-threo-dihydrosphingosine. Binds phosphoinositides. In contrast to prosurvival SPHK1, has a positive effect on intracellular ceramide levels, inhibits cells growth and enhances apoptosis. In mitochondria, is important for cytochrome-c oxidase assembly and mitochondrial respiration. The SPP produced in mitochondria binds PHB2 and modulates the regulation via PHB2 of complex IV assembly and respiration. In nucleus, plays a role in epigenetic regulation of gene expression. Interacts with HDAC1 and HDAC2 and, through SPP production, inhibits their enzymatic activity, preventing the removal of acetyl groups from lysine residues with histones. Up-regulates acetylation of histone H3-K9, histone H4-K5 and histone H2B-K12. In nucleus, may have an inhibitory effect on DNA synthesis and cell cycle. In mast cells, is the main regulator of SPP production which mediates calcium influx, NF-kappa-B activation, cytokine production, such as TNF and IL6, and degranulation of mast cells. In dopaminergic neurons, is involved in promoting mitochondrial functions regulating ATP and ROS levels. Also involved in the regulation of glucose and lipid metabolism. The protein is Sphingosine kinase 2 of Mus musculus (Mouse).